A 325-amino-acid polypeptide reads, in one-letter code: DNA-directed RNA polymerase subunit alpha (325 aa).

Positions 1 to 231 (MQNSLLKPRI…DQLNVFAALE (231 aa)) are alpha N-terminal domain (alpha-NTD). Residues 246–325 (VDPILLRPVD…ENWPPAGLEK (80 aa)) form an alpha C-terminal domain (alpha-CTD) region.

Belongs to the RNA polymerase alpha chain family. Homodimer. The RNAP catalytic core consists of 2 alpha, 1 beta, 1 beta' and 1 omega subunit. When a sigma factor is associated with the core the holoenzyme is formed, which can initiate transcription.

It carries out the reaction RNA(n) + a ribonucleoside 5'-triphosphate = RNA(n+1) + diphosphate. DNA-dependent RNA polymerase catalyzes the transcription of DNA into RNA using the four ribonucleoside triphosphates as substrates. The polypeptide is DNA-directed RNA polymerase subunit alpha (Herminiimonas arsenicoxydans).